We begin with the raw amino-acid sequence, 200 residues long: Serine/arginine-rich splicing factor RSZ23 (200 aa).

The RRM domain maps to 2-71; sequence ARVYVGNLDP…NGWRVELSTK (70 aa). A CCHC-type zinc finger spans residues 86–103; that stretch reads MKCYECGEPGHFARECRL. The tract at residues 105–200 is disordered; the sequence is IGSGGLGSGR…REESPYANNA (96 aa). The segment covering 113 to 139 has biased composition (basic residues); sequence GRRRSRSRSRSPRYRGRSRSRSPRYRR.

Belongs to the splicing factor SR family. In terms of processing, extensively phosphorylated on serine residues in the RS domain. In terms of tissue distribution, expressed in roots, leaves and immature seeds.

It localises to the nucleus. Its function is as follows. Involved in pre-mRNA splicing. In protoplast assay, enhances splicing efficiency of WAXY intron 1 and alters the selection of the 5'-splice sites by stimulating site 1 (proximal site). In Oryza sativa subsp. japonica (Rice), this protein is Serine/arginine-rich splicing factor RSZ23 (RSZ23).